Consider the following 101-residue polypeptide: Albumin (101 aa).

Albumin domains are found at residues 1–80 (DAEH…AFXY) and 81–101 (ESGAVLVSYPEMVGCCPPDVL). His4 provides a ligand contact to Cu cation.

This sequence belongs to the ALB/AFP/VDB family. Plasma.

It localises to the secreted. Functionally, binds water, Ca(2+), Na(+), K(+), fatty acids, hormones, bilirubin and drugs. Its main function is the regulation of the colloidal osmotic pressure of blood. This chain is Albumin (alb), found in Neoceratodus forsteri (Australian lungfish).